Reading from the N-terminus, the 339-residue chain is Heme A synthase (339 aa).

A run of 8 helical transmembrane segments spans residues 7 to 27 (VIIWLLSGCFLVFIMVVVGGI), 92 to 112 (HRFIGRIIGLVFIIPFIYFLI), 126 to 146 (ILLGMGAFQGFLGWFMVKSGL), 159 to 179 (LHLTFAFITFAYTLWVALDLI), 199 to 219 (AIIILQIIYGGFVAGLNAGLI), 254 to 274 (VQFVHRTIAYFVAGLIVFLTF), 291 to 311 (ALLIIVFIQFTLGVLTLLYSV), and 312 to 332 (PLWLGVIHQAMAFILLATTTY). Histidine 258 contacts heme. Histidine 319 provides a ligand contact to heme.

This sequence belongs to the COX15/CtaA family. Type 2 subfamily. In terms of assembly, interacts with CtaB. It depends on heme b as a cofactor.

The protein localises to the cell membrane. The catalysed reaction is Fe(II)-heme o + 2 A + H2O = Fe(II)-heme a + 2 AH2. Its pathway is porphyrin-containing compound metabolism; heme A biosynthesis; heme A from heme O: step 1/1. Functionally, catalyzes the conversion of heme O to heme A by two successive hydroxylations of the methyl group at C8. The first hydroxylation forms heme I, the second hydroxylation results in an unstable dihydroxymethyl group, which spontaneously dehydrates, resulting in the formyl group of heme A. The sequence is that of Heme A synthase from Flavobacterium psychrophilum (strain ATCC 49511 / DSM 21280 / CIP 103535 / JIP02/86).